We begin with the raw amino-acid sequence, 473 residues long: Catalase easC (473 aa).

A compositionally biased stretch (low complexity) spans 1–15; sequence MASEVSVASSGSEHS. The interval 1-31 is disordered; it reads MASEVSVASSGSEHSGAQKCPFQDPGLSSMD. Residue His54 is part of the active site. Tyr344 contacts heme. The segment at 352 to 389 is disordered; the sequence is LGPNNLDLPANRTKKLADGSRPEKAEMAPQKVPSQEHA. Residues 366 to 377 show a composition bias toward basic and acidic residues; it reads KLADGSRPEKAE.

This sequence belongs to the catalase family. The cofactor is heme.

It participates in alkaloid biosynthesis; ergot alkaloid biosynthesis. Its function is as follows. Catalase; part of the gene cluster that mediates the biosynthesis of fungal ergot alkaloid. DmaW catalyzes the first step of ergot alkaloid biosynthesis by condensing dimethylallyl diphosphate (DMAP) and tryptophan to form 4-dimethylallyl-L-tryptophan. The second step is catalyzed by the methyltransferase easF that methylates 4-dimethylallyl-L-tryptophan in the presence of S-adenosyl-L-methionine, resulting in the formation of 4-dimethylallyl-L-abrine. The catalase easC and the FAD-dependent oxidoreductase easE then transform 4-dimethylallyl-L-abrine to chanoclavine-I which is further oxidized by easD in the presence of NAD(+), resulting in the formation of chanoclavine-I aldehyde. Agroclavine dehydrogenase easG then mediates the conversion of chanoclavine-I aldehyde to agroclavine via a non-enzymatic adduct reaction: the substrate is an iminium intermediate that is formed spontaneously from chanoclavine-I aldehyde in the presence of glutathione. The presence of easA is not required to complete this reaction. Further conversion of agroclavine to paspalic acid is a two-step process involving oxidation of agroclavine to elymoclavine and of elymoclavine to paspalic acid, the second step being performed by the elymoclavine oxidase cloA. Paspalic acid is then further converted to D-lysergic acid. Ergopeptines are assembled from D-lysergic acid and three different amino acids by the D-lysergyl-peptide-synthetases composed each of a monomudular and a trimodular nonribosomal peptide synthetase subunit. LpsB and lpsC encode the monomodular subunits responsible for D-lysergic acid activation and incorporation into the ergopeptine backbone. LpsA1 and A2 subunits encode the trimodular nonribosomal peptide synthetase assembling the tripeptide portion of ergopeptines. LpsA1 is responsible for formation of the major ergopeptine, ergotamine, and lpsA2 for alpha-ergocryptine, the minor ergopeptine of the total alkaloid mixture elaborated by C.purpurea. D-lysergyl-tripeptides are assembled by the nonribosomal peptide synthetases and released as N-(D-lysergyl-aminoacyl)-lactams. Cyclolization of the D-lysergyl-tripeptides is performed by the Fe(2+)/2-ketoglutarate-dependent dioxygenase easH which introduces a hydroxyl group into N-(D-lysergyl-aminoacyl)-lactam at alpha-C of the aminoacyl residue followed by spontaneous condensation with the terminal lactam carbonyl group. This chain is Catalase easC, found in Claviceps purpurea (strain 20.1) (Ergot fungus).